The sequence spans 353 residues: MGCGMSTEEKEGKARNEEIENQLKRDRMQQRNEIKMLLLGAGESGKSTILKQMKLIHEGGYSRDERESFKEIIFSNTVQSMRVILEAMESLELPLADQRVEYHVQTIFMQPAQIEGDVLPPEVGNAIEALWRDAGVQSCFKRSREYQLNDSARYYFDNIARIAAPDYMPNDQDVLRSRVKTTGITETTFIIGDLTYRMFDVGGQRSERKKWIHCFENVTTILFLVAISEYDQLLFEDETVNRMQEALTLFDSICNSRWFIKTSIILFLNKIDRFKEKLPVSPMKNYFPDYEGGDDYAAACDYILNRFVSLNQHETKQIYTHFTCATDTTQIRFVMAAVNDIIIQENLRLCGLI.

Positions 1–26 are disordered; sequence MGCGMSTEEKEGKARNEEIENQLKRD. Gly-2 carries N-myristoyl glycine lipidation. Cys-3 carries S-palmitoyl cysteine lipidation. Residues 7 to 26 show a composition bias toward basic and acidic residues; the sequence is TEEKEGKARNEEIENQLKRD. Residues 32-353 enclose the G-alpha domain; it reads NEIKMLLLGA…QENLRLCGLI (322 aa). The tract at residues 35 to 48 is G1 motif; sequence KMLLLGAGESGKST. Positions 43, 44, 45, 46, 47, 48, 150, 175, 181, 203, 269, 270, 272, and 325 each coordinate GTP. Residue Ser-47 participates in Mg(2+) binding. The G2 motif stretch occupies residues 173 to 181; the sequence is DVLRSRVKT. Thr-181 serves as a coordination point for Mg(2+). The interval 196–205 is G3 motif; sequence YRMFDVGGQR. Residues 265 to 272 form a G4 motif region; that stretch reads ILFLNKID. The interval 323–328 is G5 motif; the sequence is TCATDT.

This sequence belongs to the G-alpha family. G(q) subfamily. In terms of assembly, g proteins are composed of 3 units; alpha, beta and gamma. The alpha chain contains the guanine nucleotide binding site. Requires Mg(2+) as cofactor.

Its function is as follows. Guanine nucleotide-binding proteins (G proteins) are involved as modulators or transducers in various transmembrane signaling systems. The protein is Guanine nucleotide-binding protein alpha-1 subunit (gna-1) of Neurospora crassa (strain ATCC 24698 / 74-OR23-1A / CBS 708.71 / DSM 1257 / FGSC 987).